We begin with the raw amino-acid sequence, 847 residues long: Endo-beta-N-acetylglucosaminidase EndoSd (847 aa).

The first 36 residues, 1-36 (MDKRLLVKRTLGCVCAATLMGAILATHHDSLISVKA), serve as a signal peptide directing secretion. A GH18 domain is found at 65–377 (PLYAGYFRTW…HPVVDNISHT (313 aa)). Residue His-107 participates in a glycoprotein binding. The Proton donor role is filled by Glu-186. A glycoprotein-binding residues include Glu-188, Gln-250, Tyr-252, Glu-288, Glu-289, Asn-295, and Tyr-339. 4 LRR repeats span residues 423–446 (LERY…LEKL), 447–470 (SHLQ…ILPE), 483–506 (MTGL…DVNG), and 507–530 (LTHL…ADRK). The segment at 683-836 (MENLAKGAKV…YTELQILGQR (154 aa)) is carbohydrate-binding module (CBM). Ca(2+) contacts are provided by Lys-704, Asp-707, and Glu-829.

It belongs to the glycosyl hydrolase 18 family.

It is found in the secreted. It localises to the host extracellular space. It catalyses the reaction an N(4)-(oligosaccharide-(1-&gt;3)-[oligosaccharide-(1-&gt;6)]-beta-D-Man-(1-&gt;4)-beta-D-GlcNAc-(1-&gt;4)-alpha-D-GlcNAc)-L-asparaginyl-[protein] + H2O = an oligosaccharide-(1-&gt;3)-[oligosaccharide-(1-&gt;6)]-beta-D-Man-(1-&gt;4)-D-GlcNAc + N(4)-(N-acetyl-beta-D-glucosaminyl)-L-asparaginyl-[protein]. Functionally, endoglucosidase that acts as a host immune evasion factor by mediating hydrolysis of the N-linked glycan from the Fc region of host immunoglobulin-gamma (IgG) during infection. Specifically catalyzes the hydrolysis of the beta-1,4 linkage between the first two N-acetylglucosamine residues of the complex-type N-linked glycan located on 'Asn-297' of the Fc region of IgG antibodies (IGHG1, IGHG2, IGHG3 or IGHG4), thereby preventing interaction between IgGs and Fc receptors and ability to activate the complement pathway. Shows a specificity for biantennary complex type N-glycans; does neither cleave larger complex type glycans nor oligomannose and nor hybrid-type glycans. Specifically acts on IgGs; does not act on immunoglobulin alpha, beta, delta or mu. This chain is Endo-beta-N-acetylglucosaminidase EndoSd, found in Streptococcus dysgalactiae.